We begin with the raw amino-acid sequence, 88 residues long: uncharacterized protein (88 aa).

The next 2 helical transmembrane spans lie at F13 to P33 and W62 to I82.

Its subcellular location is the cell membrane. This is an uncharacterized protein from Bacillus subtilis (strain 168).